Reading from the N-terminus, the 306-residue chain is Pyridoxal 5'-phosphate synthase subunit SNZERR (306 aa).

D34 is a D-ribose 5-phosphate binding site. Catalysis depends on K91, which acts as the Schiff-base intermediate with D-ribose 5-phosphate. G163 contacts D-ribose 5-phosphate. A D-glyceraldehyde 3-phosphate-binding site is contributed by R175. D-ribose 5-phosphate-binding positions include G224 and 245–246 (GS).

It belongs to the PdxS/SNZ family.

The enzyme catalyses aldehydo-D-ribose 5-phosphate + D-glyceraldehyde 3-phosphate + L-glutamine = pyridoxal 5'-phosphate + L-glutamate + phosphate + 3 H2O + H(+). The protein operates within cofactor biosynthesis; pyridoxal 5'-phosphate biosynthesis. Catalyzes the formation of pyridoxal 5'-phosphate from ribose 5-phosphate (RBP), glyceraldehyde 3-phosphate (G3P) and ammonia. The ammonia is provided by PDX2. Can also use ribulose 5-phosphate and dihydroxyacetone phosphate as substrates, resulting from enzyme-catalyzed isomerization of RBP and G3P, respectively. Also plays an indirect role in resistance to singlet oxygen-generating photosensitizers. The polypeptide is Pyridoxal 5'-phosphate synthase subunit SNZERR (SNZERR) (Suberites domuncula (Sponge)).